The following is a 107-amino-acid chain: Ferredoxin 1 (107 aa).

4Fe-4S ferredoxin-type domains lie at 2 to 30 (TFVV…YEGP) and 31 to 60 (NFLV…SEDE). Positions 9 and 17 each coordinate [3Fe-4S] cluster. Residues cysteine 21, cysteine 40, cysteine 43, and cysteine 46 each coordinate [4Fe-4S] cluster. Position 50 (cysteine 50) interacts with [3Fe-4S] cluster.

[4Fe-4S] cluster serves as cofactor. The cofactor is [3Fe-4S] cluster.

Its function is as follows. Ferredoxins are iron-sulfur proteins that transfer electrons in a wide variety of metabolic reactions. This chain is Ferredoxin 1, found in Stutzerimonas stutzeri (Pseudomonas stutzeri).